A 63-amino-acid polypeptide reads, in one-letter code: ComG operon repressor (63 aa).

Its function is as follows. Negatively regulates the transcription of the comG operon. The polypeptide is ComG operon repressor (comZ) (Bacillus subtilis (strain 168)).